The sequence spans 112 residues: MEGTDWSGWGDDSDFPWPKGSRVTFPSYQLEDPPYAAPSDLDLVGKGHLHIAFVILIVSLFVLLLGVLLACHFLRRSLSPISVSSRCSPCRLFYDRCRPYTSLEKGVELSCV.

The span at 1 to 10 (MEGTDWSGWG) shows a compositional bias: low complexity. The segment at 1-20 (MEGTDWSGWGDDSDFPWPKG) is disordered. A helical membrane pass occupies residues 51–71 (IAFVILIVSLFVLLLGVLLAC).

The protein resides in the host membrane. The sequence is that of Protein ORF1 from Snake adenovirus serotype 1 (SnAdV-1).